The primary structure comprises 1357 residues: Vascular endothelial growth factor receptor 2 (1357 aa).

Residues 1–22 form the signal peptide; that stretch reads MAKTSYALLLLDILLTFNVAKA. Over 23-774 the chain is Extracellular; that stretch reads IELRFVPDPP…GAEEKMNVEL (752 aa). 7 Ig-like C2-type domains span residues 32–120, 120–222, 216–330, 335–426, 433–553, 556–667, and 676–762; these read PTLN…SVAV, VYVF…VAVV, PYIV…ASLI, PFIA…RTFQ, PRIF…VIVF, TRFL…LLHN, and SRIV…ARIS. N-linked (GlcNAc...) asparagine glycosylation is found at Asn-35, Asn-44, Asn-66, Asn-97, Asn-161, Asn-209, Asn-247, Asn-272, Asn-303, Asn-307, Asn-407, Asn-501, Asn-560, Asn-621, Asn-631, Asn-640, Asn-681, Asn-688, and Asn-713. 2 cysteine pairs are disulfide-bonded: Cys-53–Cys-104 and Cys-153–Cys-203. Cys-248 and Cys-314 are joined by a disulfide. An intrachain disulfide couples Cys-457 to Cys-538. Cys-579 and Cys-651 are disulfide-bonded. A disulfide bond links Cys-697 and Cys-746. Residues 775-795 traverse the membrane as a helical segment; sequence IMPIGAVVIAMFLWLLIVFVI. Over 796-1357 the chain is Cytoplasmic; it reads RNRKRPNDGD…AEVRYSAPPV (562 aa). Residues 843–1173 form the Protein kinase domain; sequence LKLGEPLGRG…FTQLVEHLGN (331 aa). ATP is bound by residues 849-857 and Lys-877; that span reads LGRGAFGQV. Residues 944-975 form a disordered region; sequence YSPYKKRTPRMPNRREVQQDEDPREGDLGLGT. The active-site Proton acceptor is Asp-1039. 4 positions are modified to phosphotyrosine; by autocatalysis: Tyr-1065, Tyr-1070, Tyr-1186, and Tyr-1222. A disordered region spans residues 1296-1357; that stretch reads SLASESSNQT…AEVRYSAPPV (62 aa). Over residues 1298-1312 the composition is skewed to polar residues; it reads ASESSNQTSGYQSGY.

It belongs to the protein kinase superfamily. Tyr protein kinase family. CSF-1/PDGF receptor subfamily. In terms of assembly, interacts with isoform VEGF165 of vegfaa and, to a lesser extent, with isoform VEGF171 of vegfab. Interacts (via juxtamembrane region) with chaperone pdcl3 (via thioredoxin fold region); the interaction leads to increased vegfr2 abundance through inhibition of its ubiquitination and degradation. As to expression, first expressed in embryos between 5- and 7-somites in the bilateral stripes that contain the developing angioblasts, and then localized to the intermediate cell mass (ICM) and the developing vasculature. By 30 hpf, expressed in the major trunk, head and intersomitic vessels, persisting through 4 dpf when expression is seen in developing subintestinal veins and in the remaining vasculature.

The protein resides in the cell membrane. It localises to the cytoplasm. It is found in the nucleus. The protein localises to the cytoplasmic vesicle. Its subcellular location is the early endosome. The protein resides in the cell junction. It localises to the endoplasmic reticulum. It carries out the reaction L-tyrosyl-[protein] + ATP = O-phospho-L-tyrosyl-[protein] + ADP + H(+). Receptor for VEGF or VEGFC. Has a tyrosine-protein kinase activity. Combinations of multiple VEGF receptors are required for development of different blood vessel types in the embryo. Involved in angiogenesis, specifically in VEGF-induced sprouting of new blood vessels. Particularly involved in artery formation. Does not appear to be required for hematopoiesis. This is Vascular endothelial growth factor receptor 2 from Danio rerio (Zebrafish).